The primary structure comprises 343 residues: Tetraacyldisaccharide 4'-kinase (343 aa).

ATP is bound at residue 65–72; sequence HAGGTGKT.

This sequence belongs to the LpxK family.

It carries out the reaction a lipid A disaccharide + ATP = a lipid IVA + ADP + H(+). It functions in the pathway glycolipid biosynthesis; lipid IV(A) biosynthesis; lipid IV(A) from (3R)-3-hydroxytetradecanoyl-[acyl-carrier-protein] and UDP-N-acetyl-alpha-D-glucosamine: step 6/6. Transfers the gamma-phosphate of ATP to the 4'-position of a tetraacyldisaccharide 1-phosphate intermediate (termed DS-1-P) to form tetraacyldisaccharide 1,4'-bis-phosphate (lipid IVA). This chain is Tetraacyldisaccharide 4'-kinase, found in Neisseria gonorrhoeae (strain ATCC 700825 / FA 1090).